Consider the following 799-residue polypeptide: Histidine biosynthesis trifunctional protein (799 aa).

A phosphoribosyl-AMP cyclohydrolase region spans residues 1 to 229 (MVLPILPLID…FIVEQENVGF (229 aa)). The phosphoribosyl-ATP pyrophosphohydrolase stretch occupies residues 230-312 (CHLETMSCFG…FYFALAKLVA (83 aa)). A histidinol dehydrogenase region spans residues 313–799 (NDVSLKDVEN…KLGLIPKDFQ (487 aa)). Zn(2+) contacts are provided by Q618 and H621. Residues E687 and H688 contribute to the active site. D721 and H780 together coordinate Zn(2+).

In the C-terminal section; belongs to the histidinol dehydrogenase family. Requires Zn(2+) as cofactor.

It catalyses the reaction 1-(5-phospho-beta-D-ribosyl)-5'-AMP + H2O = 1-(5-phospho-beta-D-ribosyl)-5-[(5-phospho-beta-D-ribosylamino)methylideneamino]imidazole-4-carboxamide. The enzyme catalyses 1-(5-phospho-beta-D-ribosyl)-ATP + H2O = 1-(5-phospho-beta-D-ribosyl)-5'-AMP + diphosphate + H(+). The catalysed reaction is L-histidinol + 2 NAD(+) + H2O = L-histidine + 2 NADH + 3 H(+). It participates in amino-acid biosynthesis; L-histidine biosynthesis; L-histidine from 5-phospho-alpha-D-ribose 1-diphosphate: step 2/9. The protein operates within amino-acid biosynthesis; L-histidine biosynthesis; L-histidine from 5-phospho-alpha-D-ribose 1-diphosphate: step 3/9. It functions in the pathway amino-acid biosynthesis; L-histidine biosynthesis; L-histidine from 5-phospho-alpha-D-ribose 1-diphosphate: step 9/9. In Saccharomyces cerevisiae (strain ATCC 204508 / S288c) (Baker's yeast), this protein is Histidine biosynthesis trifunctional protein.